The primary structure comprises 252 residues: Cell division protein ZapD (252 aa).

It belongs to the ZapD family. Interacts with FtsZ.

It is found in the cytoplasm. Cell division factor that enhances FtsZ-ring assembly. Directly interacts with FtsZ and promotes bundling of FtsZ protofilaments, with a reduction in FtsZ GTPase activity. This chain is Cell division protein ZapD, found in Ralstonia nicotianae (strain ATCC BAA-1114 / GMI1000) (Ralstonia solanacearum).